We begin with the raw amino-acid sequence, 186 residues long: Elongation factor P (186 aa).

Belongs to the elongation factor P family.

It localises to the cytoplasm. It participates in protein biosynthesis; polypeptide chain elongation. Its function is as follows. Involved in peptide bond synthesis. Stimulates efficient translation and peptide-bond synthesis on native or reconstituted 70S ribosomes in vitro. Probably functions indirectly by altering the affinity of the ribosome for aminoacyl-tRNA, thus increasing their reactivity as acceptors for peptidyl transferase. The sequence is that of Elongation factor P from Prochlorococcus marinus subsp. pastoris (strain CCMP1986 / NIES-2087 / MED4).